A 585-amino-acid chain; its full sequence is Aspartate--tRNA(Asp/Asn) ligase (585 aa).

Residue E175 coordinates L-aspartate. Residues 199 to 202 (QLFK) form an aspartate region. R221 lines the L-aspartate pocket. ATP contacts are provided by residues 221–223 (RDE) and Q230. H448 contributes to the L-aspartate binding site. Residue E482 coordinates ATP. R489 provides a ligand contact to L-aspartate. 534–537 (GLDR) provides a ligand contact to ATP.

The protein belongs to the class-II aminoacyl-tRNA synthetase family. Type 1 subfamily. Homodimer.

The protein resides in the cytoplasm. It carries out the reaction tRNA(Asx) + L-aspartate + ATP = L-aspartyl-tRNA(Asx) + AMP + diphosphate. Its function is as follows. Aspartyl-tRNA synthetase with relaxed tRNA specificity since it is able to aspartylate not only its cognate tRNA(Asp) but also tRNA(Asn). Reaction proceeds in two steps: L-aspartate is first activated by ATP to form Asp-AMP and then transferred to the acceptor end of tRNA(Asp/Asn). The polypeptide is Aspartate--tRNA(Asp/Asn) ligase (Natranaerobius thermophilus (strain ATCC BAA-1301 / DSM 18059 / JW/NM-WN-LF)).